We begin with the raw amino-acid sequence, 466 residues long: MDFFSLNKIIKPNQKFTSNEAEFLQIATDYLEESQNYLQKGLKQLKKEYKRSIIYNPNLEYKRFVKWKENFTETFESYYDRFFITKYNHYSLSLLFSFINEQIETVIASYNSFLNEHNKLAFNKVSFSFEKKLFEATQQFNNLEKNTAISDDLPLQFKVRTTQLKAQRERELKNLLNKIKLKNLSEKKQEILLNNWFNSNERLFLKNEVKKVNWLNSPRQKQQAAQIDDQNIIELKNVYKYITNGITTNAVLKGVDLAIKSHDFIVILGPSGSGKTTLLNIISGMDRASSGSVIVNGYNMICLNDRKLTKFRQKYVGYIFQQYGLLPNLTVRENIEIGANLQPDPSKRISIDALLEAVGMDSLQKKLPNELSGGQQQRVSIARAFAKNPLLIFGDEPTGALDLEMTQIVLKQFLAIKKRYQTTMIIVTHNNLIANLADLVIYVADGKIKSLHRNLNPKQVEEIHWI.

The 231-residue stretch at 233 to 463 (IELKNVYKYI…NLNPKQVEEI (231 aa)) folds into the ABC transporter domain. 269 to 276 (GPSGSGKT) is a binding site for ATP.

It belongs to the ABC transporter superfamily.

This Mycoplasma genitalium (strain ATCC 33530 / DSM 19775 / NCTC 10195 / G37) (Mycoplasmoides genitalium) protein is Putative ABC transporter ATP-binding protein MG065.